The sequence spans 175 residues: ATP synthase subunit delta (175 aa).

Belongs to the ATPase delta chain family. In terms of assembly, F-type ATPases have 2 components, F(1) - the catalytic core - and F(0) - the membrane proton channel. F(1) has five subunits: alpha(3), beta(3), gamma(1), delta(1), epsilon(1). F(0) has three main subunits: a(1), b(2) and c(10-14). The alpha and beta chains form an alternating ring which encloses part of the gamma chain. F(1) is attached to F(0) by a central stalk formed by the gamma and epsilon chains, while a peripheral stalk is formed by the delta and b chains.

It localises to the cell inner membrane. F(1)F(0) ATP synthase produces ATP from ADP in the presence of a proton or sodium gradient. F-type ATPases consist of two structural domains, F(1) containing the extramembraneous catalytic core and F(0) containing the membrane proton channel, linked together by a central stalk and a peripheral stalk. During catalysis, ATP synthesis in the catalytic domain of F(1) is coupled via a rotary mechanism of the central stalk subunits to proton translocation. Functionally, this protein is part of the stalk that links CF(0) to CF(1). It either transmits conformational changes from CF(0) to CF(1) or is implicated in proton conduction. The polypeptide is ATP synthase subunit delta (Xanthomonas campestris pv. campestris (strain 8004)).